A 95-amino-acid polypeptide reads, in one-letter code: Protein FAM240C (95 aa).

Positions 68–95 are disordered; that stretch reads KMLQGPGRCPDRVPEATESLHTKDKKAA. Residues 76 to 95 are compositionally biased toward basic and acidic residues; sequence CPDRVPEATESLHTKDKKAA.

The protein belongs to the FAM240 family.

The chain is Protein FAM240C (FAM240C) from Homo sapiens (Human).